The chain runs to 501 residues: Zinc finger and SCAN domain-containing protein 12 (501 aa).

Glycyl lysine isopeptide (Lys-Gly) (interchain with G-Cter in SUMO2) cross-links involve residues Lys-20 and Lys-26. One can recognise an SCAN box domain in the interval 51-132 (QFCYQETSGP…DLERELDELG (82 aa)). The interval 175–194 (REAQEEQVSGVETGNEPRNV) is disordered. Polar residues predominate over residues 180–194 (EQVSGVETGNEPRNV). Lys-197 is covalently cross-linked (Glycyl lysine isopeptide (Lys-Gly) (interchain with G-Cter in SUMO2)). Residues 223–255 (EAHNPGEESSGISHEDSQPLRNENGVNSPANSE) are disordered. Residues 241-253 (PLRNENGVNSPAN) show a composition bias toward polar residues. 6 C2H2-type zinc fingers span residues 269–291 (HGCDECGKSFTQHSRLIEHKRVH), 297–319 (YKCEVCGKTFRWRTVLIRHKVVH), 325–347 (YKCNECGRAFGQWSALNQHQRLH), 353–375 (YHCNECGKAFCQKAGLFHHLKSH), 381–403 (YQCLQCNKSFNRRSTLSQHQGVH), and 409–431 (YECNDCGKAFVYNSSLATHQETH). A disordered region spans residues 429 to 450 (ETHHKEKPFTQSGPIQQQRNHT). The span at 437-447 (FTQSGPIQQQR) shows a compositional bias: polar residues. The C2H2-type 7 zinc-finger motif lies at 455 to 477 (YKCSVCGKAFIQKISLIEHEQIH). The segment at 483 to 501 (YKCAEGGKAFIQMSELTEH) adopts a C2H2-type 8; degenerate zinc-finger fold.

Belongs to the krueppel C2H2-type zinc-finger protein family. Testis specific.

The protein resides in the nucleus. Its function is as follows. May be involved in transcriptional regulation. This is Zinc finger and SCAN domain-containing protein 12 (Zscan12) from Mus musculus (Mouse).